A 359-amino-acid chain; its full sequence is Serpentine receptor class epsilon-13 (359 aa).

7 consecutive transmembrane segments (helical) span residues 33–53 (YLFV…YYLL), 74–94 (AIYL…ILLI), 111–131 (ISLF…AFVA), 150–170 (WLVG…ALDF), 180–200 (VTIF…NFLL), 237–257 (LALS…IDNL), and 266–286 (LNTV…PFVI).

It belongs to the nematode receptor-like protein sre family.

The protein resides in the membrane. In Caenorhabditis elegans, this protein is Serpentine receptor class epsilon-13 (sre-13).